Consider the following 795-residue polypeptide: Probable diacylglycerol kinase 3 (795 aa).

EF-hand domains are found at residues 170–205 (TPENKLDVVFHVYDSDGNGFLDKSEIDGIIEQMMNV) and 215–250 (ELEQVIRQMMVDIDYDNDGIVSFDEWRRGGLTNIPL). The Ca(2+) site is built by D183, D185, N187, E194, D228, D230, D232, and E239. 2 consecutive Phorbol-ester/DAG-type zinc fingers follow at residues 265–316 (SHVW…ATNC) and 329–375 (YHHW…AQEC). The 136-residue stretch at 423–558 (NDCRPLLVLV…MDRWQIKIEI (136 aa)) folds into the DAGKc domain.

The protein belongs to the eukaryotic diacylglycerol kinase family. Monomer.

It catalyses the reaction a 1,2-diacyl-sn-glycerol + ATP = a 1,2-diacyl-sn-glycero-3-phosphate + ADP + H(+). Its function is as follows. Involved in AFD-neuron mediated thermotaxis. Regulates behavior to environmental temperature. Thought to have a role in olfactory adaptation by affecting diacylglycerol levels. This Caenorhabditis elegans protein is Probable diacylglycerol kinase 3 (dgk-3).